The primary structure comprises 308 residues: General transcription factor IIH subunit 3 (308 aa).

The C4-type zinc-finger motif lies at 268–285 (CSVCLSIFCNFSPICTTC).

Belongs to the TFB4 family. Part of a TFIID-containing RNA polymerase II pre-initiation complex that is composed of TBP and at least GTF2A1, GTF2A2, GTF2E1, GTF2E2, GTF2F1, GTF2H2, GTF2H3, GTF2H4, GTF2H5, GTF2B, TCEA1, ERCC2, ERCC3, TAF1, TAF2, TAF3, TAF4, TAF5, TAF6, TAF7, TAF8, TAF9, TAF10, TAF11, TAF12 and TAF13. Component of the 7-subunit TFIIH core complex composed of XPB/ERCC3, XPD/ERCC2, GTF2H1, GTF2H2, GTF2H3, GTF2H4 and GTF2H5, which is active in NER. The core complex associates with the 3-subunit CDK-activating kinase (CAK) module composed of CCNH/cyclin H, CDK7 and MNAT1 to form the 10-subunit holoenzyme (holo-TFIIH) active in transcription. Interacts with RARA; the interaction requires prior phosphorylation of RARA on 'Ser-369' which then enhances interaction of RARA with CDK7.

It is found in the nucleus. Its function is as follows. Component of the general transcription and DNA repair factor IIH (TFIIH) core complex, which is involved in general and transcription-coupled nucleotide excision repair (NER) of damaged DNA and, when complexed to CAK, in RNA transcription by RNA polymerase II. In NER, TFIIH acts by opening DNA around the lesion to allow the excision of the damaged oligonucleotide and its replacement by a new DNA fragment. In transcription, TFIIH has an essential role in transcription initiation. When the pre-initiation complex (PIC) has been established, TFIIH is required for promoter opening and promoter escape. Phosphorylation of the C-terminal tail (CTD) of the largest subunit of RNA polymerase II by the kinase module CAK controls the initiation of transcription. This is General transcription factor IIH subunit 3 (GTF2H3) from Homo sapiens (Human).